Consider the following 365-residue polypeptide: Formamidopyrimidine-DNA glycosylase (365 aa).

The active-site Schiff-base intermediate with DNA is the Pro2. The Proton donor role is filled by Glu3. The active-site Proton donor; for beta-elimination activity is Lys61. A disordered region spans residues 121–150 (RGRLAGHGDGMDGTSRTGSTLPGTGGTENS). The span at 134 to 150 (TSRTGSTLPGTGGTENS) shows a compositional bias: polar residues. Residues His186, Arg205, and Arg246 each contribute to the DNA site. The segment at 331-365 (RVYGRGGQPCRHCGTTLATAQVAGRTTVFCPQCQR) adopts an FPG-type zinc-finger fold. Residue Arg355 is the Proton donor; for delta-elimination activity of the active site.

The protein belongs to the FPG family. Monomer. Requires Zn(2+) as cofactor.

The catalysed reaction is Hydrolysis of DNA containing ring-opened 7-methylguanine residues, releasing 2,6-diamino-4-hydroxy-5-(N-methyl)formamidopyrimidine.. The enzyme catalyses 2'-deoxyribonucleotide-(2'-deoxyribose 5'-phosphate)-2'-deoxyribonucleotide-DNA = a 3'-end 2'-deoxyribonucleotide-(2,3-dehydro-2,3-deoxyribose 5'-phosphate)-DNA + a 5'-end 5'-phospho-2'-deoxyribonucleoside-DNA + H(+). Involved in base excision repair of DNA damaged by oxidation or by mutagenic agents. Acts as a DNA glycosylase that recognizes and removes damaged bases. Has a preference for oxidized purines, such as 7,8-dihydro-8-oxoguanine (8-oxoG). Has AP (apurinic/apyrimidinic) lyase activity and introduces nicks in the DNA strand. Cleaves the DNA backbone by beta-delta elimination to generate a single-strand break at the site of the removed base with both 3'- and 5'-phosphates. This chain is Formamidopyrimidine-DNA glycosylase, found in Nitratidesulfovibrio vulgaris (strain ATCC 29579 / DSM 644 / CCUG 34227 / NCIMB 8303 / VKM B-1760 / Hildenborough) (Desulfovibrio vulgaris).